The following is a 92-amino-acid chain: Small ribosomal subunit protein uS19 (92 aa).

This sequence belongs to the universal ribosomal protein uS19 family.

Its function is as follows. Protein S19 forms a complex with S13 that binds strongly to the 16S ribosomal RNA. The polypeptide is Small ribosomal subunit protein uS19 (Gloeothece citriformis (strain PCC 7424) (Cyanothece sp. (strain PCC 7424))).